The primary structure comprises 557 residues: NAC domain-containing protein 17 (557 aa).

The 151-residue stretch at 16-166 folds into the NAC domain; it reads SAPGFRFHPT…YYALYKLFKK (151 aa). A DNA-binding region spans residues 115–172; the sequence is VGLKKTLVFYRGRAPSGERTDWVMHEYTMDEDELGRCKNPQEYYALYKLFKKSGAGPK. The helical transmembrane segment at 526 to 546 threads the bilayer; sequence FLLLSIVGALCAIFWVLVATV.

As to expression, expressed in roots, rosette leaves, cauline leaves, shoot apex, stems and flowers.

It localises to the endoplasmic reticulum membrane. Its subcellular location is the nucleus. Functionally, transcriptional activator activated by proteolytic cleavage through regulated intramembrane proteolysis (RIP). Transcriptional activator that acts as a positive regulator of AOX1A during mitochondrial dysfunction. Binds directly to AOX1A promoter. Mediates mitochondrial retrograde signaling. This chain is NAC domain-containing protein 17, found in Arabidopsis thaliana (Mouse-ear cress).